The following is a 489-amino-acid chain: Mitochondrial distribution and morphology protein 12 (489 aa).

Positions methionine 1 to valine 489 constitute an SMP-LTD domain. Positions glutamate 72 to histidine 82 are enriched in acidic residues. Disordered regions lie at residues glutamate 72–aspartate 97, tryptophan 201–arginine 313, and aspartate 394–arginine 432. Residues leucine 231–leucine 249 are compositionally biased toward polar residues. Composition is skewed to low complexity over residues serine 250–asparagine 265 and glutamine 398–glutamate 424.

It belongs to the MDM12 family. Component of the ER-mitochondria encounter structure (ERMES) or MDM complex, composed of MMM1, MDM10, mdm12 and MDM34. An MMM1 homodimer associates with one molecule of mdm12 on each side in a pairwise head-to-tail manner, and the SMP-LTD domains of MMM1 and mdm12 generate a continuous hydrophobic tunnel for phospholipid trafficking.

It localises to the mitochondrion outer membrane. It is found in the endoplasmic reticulum membrane. Functionally, component of the ERMES/MDM complex, which serves as a molecular tether to connect the endoplasmic reticulum (ER) and mitochondria. Components of this complex are involved in the control of mitochondrial shape and protein biogenesis, and function in nonvesicular lipid trafficking between the ER and mitochondria. mdm12 is required for the interaction of the ER-resident membrane protein MMM1 and the outer mitochondrial membrane-resident beta-barrel protein MDM10. The mdm12-MMM1 subcomplex functions in the major beta-barrel assembly pathway that is responsible for biogenesis of all mitochondrial outer membrane beta-barrel proteins, and acts in a late step after the SAM complex. The MDM10-mdm12-MMM1 subcomplex further acts in the TOM40-specific pathway after the action of the mdm12-MMM1 complex. Essential for establishing and maintaining the structure of mitochondria and maintenance of mtDNA nucleoids. This chain is Mitochondrial distribution and morphology protein 12, found in Talaromyces marneffei (strain ATCC 18224 / CBS 334.59 / QM 7333) (Penicillium marneffei).